The sequence spans 901 residues: Cyanophycin synthetase (901 aa).

The ATP-grasp domain maps to 224-478 (KRILAASGVP…VAGAVMDMLF (255 aa)). An ATP-binding site is contributed by 493 to 499 (GTNGKTT).

In the C-terminal section; belongs to the MurCDEF family. Homodimer.

It carries out the reaction [L-4-(L-arginin-2-N-yl)aspartate](n) + L-aspartate + ATP = [L-4-(L-arginin-2-N-yl)aspartate](n)-L-aspartate + ADP + phosphate + H(+). It catalyses the reaction [L-4-(L-arginin-2-N-yl)aspartate](n)-L-aspartate + L-arginine + ATP = [L-4-(L-arginin-2-N-yl)aspartate](n+1) + ADP + phosphate + H(+). Its function is as follows. Catalyzes the ATP-dependent polymerization of arginine and aspartate to multi-L-arginyl-poly-L-aspartic acid (cyanophycin; a water-insoluble reserve polymer). This is Cyanophycin synthetase (cphA) from Nostoc sp. (strain PCC 7120 / SAG 25.82 / UTEX 2576).